Consider the following 513-residue polypeptide: ATP synthase subunit alpha (513 aa).

169-176 provides a ligand contact to ATP; that stretch reads GDRQTGKT.

Belongs to the ATPase alpha/beta chains family. In terms of assembly, F-type ATPases have 2 components, CF(1) - the catalytic core - and CF(0) - the membrane proton channel. CF(1) has five subunits: alpha(3), beta(3), gamma(1), delta(1), epsilon(1). CF(0) has three main subunits: a(1), b(2) and c(9-12). The alpha and beta chains form an alternating ring which encloses part of the gamma chain. CF(1) is attached to CF(0) by a central stalk formed by the gamma and epsilon chains, while a peripheral stalk is formed by the delta and b chains.

Its subcellular location is the cell inner membrane. The catalysed reaction is ATP + H2O + 4 H(+)(in) = ADP + phosphate + 5 H(+)(out). Functionally, produces ATP from ADP in the presence of a proton gradient across the membrane. The alpha chain is a regulatory subunit. The protein is ATP synthase subunit alpha of Yersinia pseudotuberculosis serotype O:1b (strain IP 31758).